The chain runs to 1135 residues: Glutamate receptor ionotropic, NMDA 3A (1135 aa).

A signal peptide spans 1 to 23 (MRRLSLWWLLSRVCLLLPPPCAL). Residues 24 to 674 (VLAGVPSSSS…PIGAFMWPLH (651 aa)) lie on the Extracellular side of the membrane. The disordered stretch occupies residues 60–117 (TAPRAASRAQEGGRAGAQRDDPESGTWRPPAPSQGARWLGSALHGRGPPGSRKLGEGA). N145, N264, N275, N285, N296, N300, N426, N439, N549, and N565 each carry an N-linked (GlcNAc...) asparagine glycan. 2 disulfides stabilise this stretch: C537/C575 and C543/C576. Residues S631, S633, and R638 each coordinate glycine. The D-serine site is built by S633 and R638. The chain crosses the membrane as a helical span at residues 675-694 (WTMWLGIFVALHITAIFLTL). At 695–715 (YEWKSPFGMTPKGRNRNKVFS) the chain is on the cytoplasmic side. The discontinuously helical intramembrane region spans 716–727 (FSSALNVCYALL). At 728–741 (FGRTAAIKPPKCWT) the chain is on the cytoplasmic side. The helical transmembrane segment at 742 to 761 (GRFLMNLWAIFCMFCLSTYT) threads the bilayer. At 762 to 932 (ANLAAVMVGE…TLQMGIKHFS (171 aa)) the chain is on the extracellular side. S801 contacts glycine. Positions 801, 802, and 845 each coordinate D-serine. D845 serves as a coordination point for glycine. C859 and C913 form a disulfide bridge. N886 is a glycosylation site (N-linked (GlcNAc...) asparagine). The helical transmembrane segment at 933–948 (GLFVLLCIGFGLSILT) threads the bilayer. At 949-1135 (TIGEHIVHRL…YQKTNRTCES (187 aa)) the chain is on the cytoplasmic side. Residues 951-987 (GEHIVHRLLLPRIKNKSKLQYWLHTSQRFHRALNTSF) are PPP2CB binding site. Residues 1080 to 1129 (TTNGKADSLNVTRSSVIQELSELEKQIQVIRQELQLAVSRKTELEEYQKT) are a coiled coil. The interval 1082 to 1115 (NGKADSLNVTRSSVIQELSELEKQIQVIRQELQL) is GIT1-binding.

The protein belongs to the glutamate-gated ion channel (TC 1.A.10.1) family. NR3A/GRIN3A subfamily. As to quaternary structure, heterotetramer. Forms heterotetrameric channels composed of two GluN1/zeta subunits (GRIN1), and two identical GluN3 subunits (GRIN3A or GRIN3B) (in vitro). Can also form heterotetrameric channels that contain at least two GluN1 subunits and at least a combination of one GluN2 and one GluN3 subunits (in vitro). Does not form functional homomeric channels. Found in a complex with GRIN1, GRIN2A or GRIN2B and PPP2CB. Probably interacts with PPP2CB. No complex with PPP2CB is detected when NMDARs are stimulated by NMDA. Interacts (via C-terminus) with GIT1, but not with GRIA1/GluA1, nor with synaptophysin/SYP; this interaction competes with GIT1 interaction with ARHGEF7/beta-PIX. Post-translationally, N-glycosylated. As to expression, isoform 1 and isoform 2 are expressed in olfactory bulb, frontal occipital, entorhinal and pyriform cortices, hippocampus, striatum, thalamus, cerebellum and spinal cord.

It is found in the cell membrane. Its subcellular location is the postsynaptic cell membrane. The protein resides in the postsynaptic density. It carries out the reaction Ca(2+)(in) = Ca(2+)(out). The enzyme catalyses Na(+)(in) = Na(+)(out). With respect to regulation, excitatory glycine receptors are inhibited by D-serine at a concentrion of 10uM. In terms of biological role, component of a non-conventional N-methyl-D-aspartate (NMDA) receptors (NMDARs) that function as heterotetrameric, ligand-gated cation channels with low calcium permeability and low voltage-dependent block by Mg(2+). During the development of neural circuits, participates in the synaptic refinement period, restricting spine maturation and growth. Forms glutamatergic receptor complexes with GluN1 and GluN2 subunits which are activated by glycine binding to the GluN1 and GluN3 subunits and L-glutamate binding to GluN2 subunits. Forms excitatory glycinergic receptor complexes with GluN1 alone which are activated by glycine binding to the GluN1 and GluN3 subunits. GluN3A subunit also binds D-serine. Each GluN3 subunit confers differential attributes to channel properties, including activation, deactivation and desensitization kinetics, pH sensitivity, Ca2(+) permeability, and binding to allosteric modulators. By competing with GIT1 interaction with ARHGEF7/beta-PIX, may reduce GIT1/ARHGEF7-regulated local activation of RAC1, hence affecting signaling and limiting the maturation and growth of inactive synapses. The chain is Glutamate receptor ionotropic, NMDA 3A from Rattus norvegicus (Rat).